Consider the following 314-residue polypeptide: O-antigen chain rhamnosyltransferase RfbN (314 aa).

Belongs to the glycosyltransferase 2 family.

It carries out the reaction alpha-D-galactosyl-di-trans,octa-cis-undecaprenyl diphosphate + dTDP-beta-L-rhamnose = alpha-L-rhamnosyl-(1-&gt;3)-alpha-D-galactosyl-1-diphospho-di-trans,octa-cis-undecaprenol + dTDP + H(+). It functions in the pathway bacterial outer membrane biogenesis; LPS O-antigen biosynthesis. Rhamnosyltransferase involved in the biosynthesis of the repeat unit of the lipopolysaccharide (LPS) O-antigen region. Catalyzes the addition of a rhamnose to the galactosyl-undecaprenyl diphosphate intermediate. The polypeptide is O-antigen chain rhamnosyltransferase RfbN (Salmonella typhimurium (strain LT2 / SGSC1412 / ATCC 700720)).